Consider the following 274-residue polypeptide: Guanylyl cyclase 1 (274 aa).

Functions both as monomer and homooligomer. Requires Mg(2+) as cofactor.

The catalysed reaction is GTP = 3',5'-cyclic GMP + diphosphate. It functions in the pathway nucleotide metabolism. In terms of biological role, magnesium-dependent guanylyl cyclase that catalyzes the formation of guanosine 3',5'-cyclic monophosphate (cGMP) from guanosine 5'-triphosphate (GTP). Can also use ATP as substrate with a low activity. The protein is Guanylyl cyclase 1 of Arabidopsis thaliana (Mouse-ear cress).